The primary structure comprises 246 residues: Small ribosomal subunit protein uS2 (246 aa).

A disordered region spans residues 225-246; sequence SKSSASVPNKDEYVAAEDGAAE.

This sequence belongs to the universal ribosomal protein uS2 family.

The chain is Small ribosomal subunit protein uS2 from Cellvibrio japonicus (strain Ueda107) (Pseudomonas fluorescens subsp. cellulosa).